The following is a 143-amino-acid chain: Nucleoside diphosphate kinase (143 aa).

One can recognise an NDPK-like domain in the interval 1–132 (MVKPDGVQRG…LWFSPQELCQ (132 aa)). The ADP site is built by Lys3, Phe51, Arg79, Thr85, Arg96, Val103, and Asn106. Lys3, Phe51, Arg79, Thr85, and Arg96 together coordinate ATP. Asn106 provides a ligand contact to ATP. Residue His109 is the Pros-phosphohistidine intermediate of the active site.

This sequence belongs to the NDK family. Homohexamer. It depends on Mg(2+) as a cofactor.

The catalysed reaction is a 2'-deoxyribonucleoside 5'-diphosphate + ATP = a 2'-deoxyribonucleoside 5'-triphosphate + ADP. It catalyses the reaction a ribonucleoside 5'-diphosphate + ATP = a ribonucleoside 5'-triphosphate + ADP. The enzyme catalyses GDP + ATP = GTP + ADP. The protein operates within purine metabolism; purine nucleotide biosynthesis. Its function is as follows. Major role in the synthesis of nucleoside triphosphates other than ATP. The ATP gamma phosphate is transferred to the NDP beta phosphate via a ping-pong mechanism, using a phosphorylated active-site intermediate. This chain is Nucleoside diphosphate kinase, found in Schistosoma mansoni (Blood fluke).